Reading from the N-terminus, the 389-residue chain is Chalcone synthase 1A (389 aa).

The active site involves Cys164.

The protein belongs to the thiolase-like superfamily. Chalcone/stilbene synthases family.

The catalysed reaction is (E)-4-coumaroyl-CoA + 3 malonyl-CoA + 3 H(+) = 2',4,4',6'-tetrahydroxychalcone + 3 CO2 + 4 CoA. The protein operates within secondary metabolite biosynthesis; flavonoid biosynthesis. In terms of biological role, the primary product of this enzyme is 4,2',4',6'-tetrahydroxychalcone (also termed naringenin-chalcone or chalcone) which can under specific conditions spontaneously isomerize into naringenin. The sequence is that of Chalcone synthase 1A (CHS1A) from Solanum tuberosum (Potato).